Consider the following 333-residue polypeptide: MIDITLPLTDIHRHLDGNIRAQTILDLGRQFNIALPAQTLETLIPHVQVTSTEPDLVSFLTKLDWGVKVLASLDACRRVAFENIEDAARNGLHYVELRFSPGYMAMAHQLPIAGVVEAVIDGVRDGCNTFGVEARLIGIMSRTFGEAACLQELDALLAHRENITALDLAGDELGFPGSLFLSHFNRARDAGWHITVHAGEAAGPESIWQAIRELGAERIGHGVKAVEDRTLMDFLAQQRIGIESCLTSNIQTSTVASLADHPLKTFLEHGVLASLNTDDPAVQGVDIIHEYHVAAPAAGLSREQIRQAQINGLEIAFLSDGEKRALREKVAAA.

Histidine 12 and histidine 14 together coordinate Zn(2+). Substrate is bound by residues histidine 14, aspartate 16, and glycine 170. Histidine 197 serves as a coordination point for Zn(2+). Residue glutamate 200 is the Proton donor of the active site. Aspartate 278 lines the Zn(2+) pocket. Aspartate 279 contributes to the substrate binding site.

This sequence belongs to the metallo-dependent hydrolases superfamily. Adenosine and AMP deaminases family. Adenosine deaminase subfamily. The cofactor is Zn(2+).

It carries out the reaction adenosine + H2O + H(+) = inosine + NH4(+). The catalysed reaction is 2'-deoxyadenosine + H2O + H(+) = 2'-deoxyinosine + NH4(+). Its function is as follows. Catalyzes the hydrolytic deamination of adenosine and 2-deoxyadenosine. This Salmonella dublin (strain CT_02021853) protein is Adenosine deaminase.